Consider the following 66-residue polypeptide: Large ribosomal subunit protein bL33c (66 aa).

The protein belongs to the bacterial ribosomal protein bL33 family.

Its subcellular location is the plastid. In Epifagus virginiana (Beechdrops), this protein is Large ribosomal subunit protein bL33c (rpl33).